A 299-amino-acid chain; its full sequence is MTFKSGFVAILGRPNVGKSTFLNHVMGQKIAIMSDKAQTTRNKIMGIYTTDKEQIVFIDTPGIHKPKTALGDFMVESAYSTLREVDTVLFMVPADEARGKGDDMIIERLKAAKVPVILVVNKIDKVHPDQLLSQIDDFRNQMDFKEIVPISALQGNNVSRLVDILSENLDEGFQYFPSDQITDHPERFLVSEMVREKVLHLTREEIPHSVAVVVDSMKRDEETDKVHIRATIMVERDSQKGIIIGKGGAMLKKIGSMARRDIELMLGDKVFLETWVKVKKNWRDKKLDLADFGYNEKEY.

Residues 4-171 (KSGFVAILGR…VDILSENLDE (168 aa)) form the Era-type G domain. The interval 12-19 (GRPNVGKS) is G1. 12–19 (GRPNVGKS) lines the GTP pocket. Residues 38 to 42 (QTTRN) form a G2 region. Positions 59–62 (DTPG) are G3. GTP contacts are provided by residues 59–63 (DTPGI) and 121–124 (NKID). Residues 121–124 (NKID) are G4. Positions 150-152 (ISA) are G5. Residues 202 to 280 (TREEIPHSVA…FLETWVKVKK (79 aa)) enclose the KH type-2 domain.

It belongs to the TRAFAC class TrmE-Era-EngA-EngB-Septin-like GTPase superfamily. Era GTPase family. Monomer.

The protein resides in the cytoplasm. Its subcellular location is the cell membrane. Functionally, an essential GTPase that binds both GDP and GTP, with rapid nucleotide exchange. Plays a role in 16S rRNA processing and 30S ribosomal subunit biogenesis and possibly also in cell cycle regulation and energy metabolism. The polypeptide is GTPase Era (Streptococcus pneumoniae (strain Hungary19A-6)).